Here is a 283-residue protein sequence, read N- to C-terminus: MIYENAPAKINLTLDTLYKRDDGYHEVEMIMTTVDLYDRLTLEKRKDKKIVLKIEHRYVPNDHRNLAYKAAELMIERYNIKCGVTITLDKTIPIAAGLAGGSSDAAATFRGMNKLFELNLSLKTLAELSSEIGSDIPFCIYGRTSLCTGRGEVLEHLPKPPSCWVILAKPEISVSTQEVYSALDLSQAHEQIENEKCRRAIEAGDYLEMIRTLGNRLETVTIEMHPVIQMLKETMMKAGADVAMMSGSGPTVYGLAAKERQAKSVVNALKGCCKEVYMVRMLG.

K9 is a catalytic residue. 93 to 103 (PIAAGLAGGSS) is a binding site for ATP. D135 is an active-site residue.

Belongs to the GHMP kinase family. IspE subfamily.

The catalysed reaction is 4-CDP-2-C-methyl-D-erythritol + ATP = 4-CDP-2-C-methyl-D-erythritol 2-phosphate + ADP + H(+). Its pathway is isoprenoid biosynthesis; isopentenyl diphosphate biosynthesis via DXP pathway; isopentenyl diphosphate from 1-deoxy-D-xylulose 5-phosphate: step 3/6. Catalyzes the phosphorylation of the position 2 hydroxy group of 4-diphosphocytidyl-2C-methyl-D-erythritol. The chain is 4-diphosphocytidyl-2-C-methyl-D-erythritol kinase from Macrococcus caseolyticus (strain JCSC5402) (Macrococcoides caseolyticum).